The chain runs to 253 residues: 3-dehydroquinate dehydratase (253 aa).

3-dehydroquinate-binding positions include 46–48 and Arg82; that span reads EWR. His143 functions as the Proton donor/acceptor in the catalytic mechanism. Catalysis depends on Lys170, which acts as the Schiff-base intermediate with substrate. 3-dehydroquinate-binding residues include Arg213, Ser232, and Gln236.

This sequence belongs to the type-I 3-dehydroquinase family. In terms of assembly, homodimer.

It catalyses the reaction 3-dehydroquinate = 3-dehydroshikimate + H2O. Its pathway is metabolic intermediate biosynthesis; chorismate biosynthesis; chorismate from D-erythrose 4-phosphate and phosphoenolpyruvate: step 3/7. Involved in the third step of the chorismate pathway, which leads to the biosynthesis of aromatic amino acids. Catalyzes the cis-dehydration of 3-dehydroquinate (DHQ) and introduces the first double bond of the aromatic ring to yield 3-dehydroshikimate. The protein is 3-dehydroquinate dehydratase of Bacillus velezensis (strain DSM 23117 / BGSC 10A6 / LMG 26770 / FZB42) (Bacillus amyloliquefaciens subsp. plantarum).